We begin with the raw amino-acid sequence, 288 residues long: NAD kinase (288 aa).

The active-site Proton acceptor is the Asp73. NAD(+)-binding positions include 73-74 (DG), Arg78, 144-145 (NE), Asp174, 185-190 (TAYSLS), and Ala209.

The protein belongs to the NAD kinase family. Requires a divalent metal cation as cofactor.

The protein resides in the cytoplasm. The enzyme catalyses NAD(+) + ATP = ADP + NADP(+) + H(+). Involved in the regulation of the intracellular balance of NAD and NADP, and is a key enzyme in the biosynthesis of NADP. Catalyzes specifically the phosphorylation on 2'-hydroxyl of the adenosine moiety of NAD to yield NADP. The sequence is that of NAD kinase from Porphyromonas gingivalis (strain ATCC 33277 / DSM 20709 / CIP 103683 / JCM 12257 / NCTC 11834 / 2561).